The primary structure comprises 644 residues: Sentrin-specific protease 1 (644 aa).

An interaction with CCAR2 region spans residues 1–200; it reads MDDIADRMRM…REIYRQLLQM (200 aa). Phosphoserine occurs at positions 57, 117, 132, and 157. A disordered region spans residues 92–117; that stretch reads QSANGQWRNSTPSSSSSLQKSRNSRS. Residues 99–117 are compositionally biased toward low complexity; the sequence is RNSTPSSSSSLQKSRNSRS. Disordered stretches follow at residues 156–184 and 283–312; these read PSPS…TAEE and SKDS…NTQS. The Nuclear localization signal motif lies at 171–177; sequence PKKTQRR. The tract at residues 450–613 is protease; it reads LTITRKDIQT…GMFACKYADC (164 aa). Active-site residues include histidine 533 and aspartate 550. The Nuclear localization signal signature appears at 574–577; that stretch reads KKRK. The active-site Nucleophile is the cysteine 603. The Nuclear localization signal signature appears at 628-634; sequence PYFRKRM. A Nuclear export signal motif is present at residues 635 to 644; sequence VWEILHRKLL.

It belongs to the peptidase C48 family. Interacts with RBM33; promoting ALKBH5 desumoylation and subsequent activation. In terms of tissue distribution, highly expressed in testis. Expressed at lower levels in thymus, pancreas, spleen, liver, ovary and small intestine.

The protein resides in the nucleus. It localises to the cytoplasm. Protease that catalyzes two essential functions in the SUMO pathway. The first is the hydrolysis of an alpha-linked peptide bond at the C-terminal end of the small ubiquitin-like modifier (SUMO) propeptides, SUMO1, SUMO2 and SUMO3 leading to the mature form of the proteins. The second is the deconjugation of SUMO1, SUMO2 and SUMO3 from targeted proteins, by cleaving an epsilon-linked peptide bond between the C-terminal glycine of the mature SUMO and the lysine epsilon-amino group of the target protein. Deconjugates SUMO1 from HIPK2. Deconjugates SUMO1 from HDAC1 and BHLHE40/DEC1, which decreases its transcriptional repression activity. Deconjugates SUMO1 from CLOCK, which decreases its transcriptional activation activity. Deconjugates SUMO2 from MTA1. Inhibits N(6)-methyladenosine (m6A) RNA methylation by mediating SUMO1 deconjugation from METTL3 and ALKBH5: METTL3 inhibits the m6A RNA methyltransferase activity, while ALKBH5 desumoylation promotes m6A demethylation. Desumoylates CCAR2 which decreases its interaction with SIRT1. Deconjugates SUMO1 from GPS2. This Homo sapiens (Human) protein is Sentrin-specific protease 1 (SENP1).